Consider the following 659-residue polypeptide: Putative pentatricopeptide repeat-containing protein At3g16890, mitochondrial (659 aa).

A mitochondrion-targeting transit peptide spans Met-1–Ser-32. PPR repeat units lie at residues Asp-109 to Ile-143, Ser-144 to Pro-178, Ser-179 to Pro-213, Asp-214 to Pro-248, Asn-249 to Pro-283, Asn-284 to Leu-318, Gln-319 to Pro-353, Asp-354 to Pro-388, Gly-389 to Ser-423, Ser-424 to Pro-458, Asn-459 to Pro-493, Asp-494 to Pro-528, Asn-529 to Pro-563, Asp-564 to Pro-598, and Asp-599 to Pro-633.

It belongs to the PPR family. P subfamily.

The protein localises to the mitochondrion. Its function is as follows. Required for the ubiquinol-cytochrome c oxidoreductase activity of mitochondrial complex III. This chain is Putative pentatricopeptide repeat-containing protein At3g16890, mitochondrial (PPR40), found in Arabidopsis thaliana (Mouse-ear cress).